Consider the following 503-residue polypeptide: ATP synthase subunit alpha (503 aa).

Position 170–177 (170–177 (GDRQTGKT)) interacts with ATP.

Belongs to the ATPase alpha/beta chains family. In terms of assembly, F-type ATPases have 2 components, CF(1) - the catalytic core - and CF(0) - the membrane proton channel. CF(1) has five subunits: alpha(3), beta(3), gamma(1), delta(1), epsilon(1). CF(0) has three main subunits: a(1), b(2) and c(9-12). The alpha and beta chains form an alternating ring which encloses part of the gamma chain. CF(1) is attached to CF(0) by a central stalk formed by the gamma and epsilon chains, while a peripheral stalk is formed by the delta and b chains.

It localises to the cell inner membrane. The enzyme catalyses ATP + H2O + 4 H(+)(in) = ADP + phosphate + 5 H(+)(out). Functionally, produces ATP from ADP in the presence of a proton gradient across the membrane. The alpha chain is a regulatory subunit. The polypeptide is ATP synthase subunit alpha (Thermotoga neapolitana (strain ATCC 49049 / DSM 4359 / NBRC 107923 / NS-E)).